A 384-amino-acid polypeptide reads, in one-letter code: Substance-K receptor (384 aa).

Residues 1-32 (MGAHAIVTDANISSSLENNTTGITAFSMPGWQ) lie on the Extracellular side of the membrane. Asn11, Asn18, and Asn19 each carry an N-linked (GlcNAc...) asparagine glycan. The chain crosses the membrane as a helical span at residues 33 to 56 (LALWATAYLVLVLVAVTGNATVIW). Over 57–69 (IILAHQRMRTVTN) the chain is Cytoplasmic. The chain crosses the membrane as a helical span at residues 70–90 (YFIVNLALADLCMAAFNAAFN). Over 91 to 107 (FVYASHNIWYFGRAFCH) the chain is Extracellular. Cys106 and Cys181 are disulfide-bonded. The chain crosses the membrane as a helical span at residues 108–129 (FQNLFPITAMFVSIYSMTAIAA). Topologically, residues 130–149 (DRYVAIVHPFQPRLSAPGTR) are cytoplasmic. The chain crosses the membrane as a helical span at residues 150–170 (AVIAGIWLLALALAFPQCFYS). Residues 171–196 (TITMDQGATKCVVVWPEDNGSKMLLL) are Extracellular-facing. A helical membrane pass occupies residues 197-218 (YHLVVIALIYVLPLLVMLLAYS). The Cytoplasmic segment spans residues 219-251 (VIGLTLWRREVPRHQVHGASLRHLRAKKKFVKT). A helical membrane pass occupies residues 252–272 (MVLVVVTFAICWLPYHFYFIL). Over 273–290 (GSFQEDIYYHKFIQQVYL) the chain is Extracellular. A helical transmembrane segment spans residues 291-310 (ALFWLAMSSTMYNPIIYCCL). Residues 311–384 (NHRFRSGFRL…GPQDGLPDEP (74 aa)) are Cytoplasmic-facing. A lipid anchor (S-palmitoyl cysteine) is attached at Cys324.

The protein belongs to the G-protein coupled receptor 1 family.

The protein localises to the cell membrane. In terms of biological role, this is a receptor for the tachykinin neuropeptide substance K (neurokinin A). It is associated with G proteins that activate a phosphatidylinositol-calcium second messenger system. This is Substance-K receptor (TACR2) from Canis lupus familiaris (Dog).